The primary structure comprises 85 residues: U4-theraphotoxin-Hhn1a (85 aa).

The N-terminal stretch at 1 to 22 (MKVTLISILTCAAVLVLHTTAA) is a signal peptide. Residues 23-48 (EELEAESQLMEVGMPDTELAAVDEER) constitute a propeptide that is removed on maturation. Intrachain disulfides connect cysteine 52-cysteine 66, cysteine 56-cysteine 77, and cysteine 71-cysteine 82.

It belongs to the neurotoxin 12 (Hwtx-2) family. 02 (Hwtx-2) subfamily. Monomer. As to expression, expressed by the venom gland.

The protein resides in the secreted. Its function is as follows. Neurotoxin active on both insects and mammals. This Cyriopagopus hainanus (Chinese bird spider) protein is U4-theraphotoxin-Hhn1a.